The chain runs to 1497 residues: Dual oxidase 1 (1497 aa).

The N-terminal stretch at 1 to 21 (MRSKHVLYIAILFSSIFGGKG) is a signal peptide. Over 22–587 (IQQNEEFQRY…MQSTYWTDND (566 aa)) the chain is Extracellular. Residues 26–590 (EEFQRYDGWY…TYWTDNDTTY (565 aa)) form a peroxidase-like; mediates peroxidase activity region. N-linked (GlcNAc...) asparagine glycans are attached at residues asparagine 66, asparagine 305, asparagine 567, and asparagine 586. Residues 588 to 608 (TTYVFTLIGLACVPLICYGIG) traverse the membrane as a helical segment. The Cytoplasmic segment spans residues 609–986 (RYLVNRRIAI…VSAFLETYRQ (378 aa)). EF-hand domains follow at residues 817–852 (ANNE…FVNA) and 853–888 (PQKQ…LNQT). Residues 987–1007 (HVFIVFCFVAINLVLFFERFW) traverse the membrane as a helical segment. Residues 1008-1024 (HYRYMAENRDLRRVMGA) are Extracellular-facing. Residues 1025 to 1045 (GIAITRGAAGALSFCMALILL) traverse the membrane as a helical segment. The 181-residue stretch at 1030–1210 (RGAAGALSFC…FVIDRIIGLM (181 aa)) folds into the Ferric oxidoreductase domain. Topologically, residues 1046–1068 (TVCRNIITLLRETVIAQYIPFDS) are cytoplasmic. Residues 1069–1089 (AIAFHKIVALFAAFWATLHTV) traverse the membrane as a helical segment. Topologically, residues 1090–1134 (GHCVNFYHVGTQSQEGLACLFQEAFFGSNFLPSISYWFFSTITGL) are extracellular. The chain crosses the membrane as a helical span at residues 1135–1155 (TGIALVAVMCIIYVFALPCFI). The Cytoplasmic segment spans residues 1156-1163 (KRAYHAFR). The helical transmembrane segment at 1164–1184 (LTHLLNIAFYALTLLHGLPKL) threads the bilayer. Residues 1185–1189 (LDSPK) lie on the Extracellular side of the membrane. A helical transmembrane segment spans residues 1190 to 1210 (FGYYVVGPIVLFVIDRIIGLM). The region spanning 1211–1318 (QYYKKLEIVN…KGPYGDGNQE (108 aa)) is the FAD-binding FR-type domain. The Cytoplasmic segment spans residues 1211-1497 (QYYKKLEIVN…PSFAHRFETF (287 aa)).

In the N-terminal section; belongs to the peroxidase family. Interacts with doxa-1 and tsp-15. Interacts with rho-1. Expressed in hypodermal cells.

It is found in the membrane. It carries out the reaction NADH + O2 + H(+) = H2O2 + NAD(+). The enzyme catalyses NADPH + O2 + H(+) = H2O2 + NADP(+). Its activity is regulated as follows. Peroxidase activity is inhibited by aminobenzohydrazide. Its function is as follows. Plays a role in cuticle biogenesis. In complex with doxa-1 and tsp-15, produces reactive oxygen species (ROS), which are probably used by mlt-7 for tyrosine cross-linking, thus stabilizing cuticular extracellular matrix. May regulate the production of ROS by playing a role in modulating proline catabolism. Required in combination with mlt-7 for correct formation of cross-links in cuticle collagens. Association with the GTPase rho-1 promotes ROS production and this interaction may be modulated by memo-1, in order to control the oxidative stress response and longevity. This Caenorhabditis elegans protein is Dual oxidase 1.